A 236-amino-acid polypeptide reads, in one-letter code: Reticulon-3 (236 aa).

The segment covering 1–24 has biased composition (low complexity); the sequence is MAEPSAATQSPSISSSSSGAEPSA. The disordered stretch occupies residues 1 to 31; it reads MAEPSAATQSPSISSSSSGAEPSAPGGGGSP. Alanine 2 carries the post-translational modification N-acetylalanine. The Cytoplasmic segment spans residues 2 to 67; the sequence is AEPSAATQSP…KKTGFVFGTT (66 aa). A Phosphoserine modification is found at serine 30. Positions 48 to 236 constitute a Reticulon domain; sequence VHDLIFWRDV…LPGIAKKKAE (189 aa). Residues 68 to 91 constitute an intramembrane region (helical); the sequence is LIMLLSLAAFSVISVVSYLILALL. The Cytoplasmic portion of the chain corresponds to 92-151; sequence SVTISFRIYKSVIQAVQKSEEGHPFKAYLDVDITLSSEAFHNYMNAAMVHINRALKLIIR. The segment at residues 152–172 is an intramembrane region (helical); that stretch reads LFLVEDLVDSLKLAVFMWLMT. Residues 173–176 are Cytoplasmic-facing; that stretch reads YVGA. The helical intramembrane region spans 177 to 197; that stretch reads VFNGITLLILAELLIFSVPIV. The tract at residues 191 to 236 is interaction with FADD; it reads IFSVPIVYEKYKTQIDHYVGIARDQTKSIVEKIQAKLPGIAKKKAE. The Cytoplasmic segment spans residues 198–236; sequence YEKYKTQIDHYVGIARDQTKSIVEKIQAKLPGIAKKKAE. Residues 204–206 are interaction with BACE1; it reads QID.

As to quaternary structure, homodimer. Interacts with RTN4. Interacts with BACE1, BACE2, BCL2 and FADD. Interacts with ATL1 and ATL2. Interacts with TMEM33. Interacts with ZFYVE27 and with KIF5A in a ZFYVE27-dependent manner. Interacts with RIGI. Interacts with TRIM25.

It localises to the endoplasmic reticulum membrane. The protein resides in the golgi apparatus membrane. In terms of biological role, may be involved in membrane trafficking in the early secretory pathway. Inhibits BACE1 activity and amyloid precursor protein processing. May induce caspase-8 cascade and apoptosis. May favor BCL2 translocation to the mitochondria upon endoplasmic reticulum stress. Induces the formation of endoplasmic reticulum tubules. Acts also as an inflammation-resolving regulator by interacting with both TRIM25 and RIGI, subsequently impairing RIGI 'Lys-63'-linked polyubiquitination leading to IRF3 and NF-kappa-B inhibition. The sequence is that of Reticulon-3 (RTN3) from Pongo abelii (Sumatran orangutan).